A 250-amino-acid polypeptide reads, in one-letter code: Geranylgeranylglyceryl phosphate synthase (250 aa).

Residues D23 and S52 each contribute to the Mg(2+) site. Sn-glycerol 1-phosphate is bound by residues Y170 to G176, G202 to G203, and G224 to T225.

This sequence belongs to the GGGP/HepGP synthase family. Group II subfamily. Mg(2+) serves as cofactor.

Its subcellular location is the cytoplasm. It catalyses the reaction sn-glycerol 1-phosphate + (2E,6E,10E)-geranylgeranyl diphosphate = sn-3-O-(geranylgeranyl)glycerol 1-phosphate + diphosphate. It functions in the pathway membrane lipid metabolism; glycerophospholipid metabolism. Prenyltransferase that catalyzes the transfer of the geranylgeranyl moiety of geranylgeranyl diphosphate (GGPP) to the C3 hydroxyl of sn-glycerol-1-phosphate (G1P). This reaction is the first ether-bond-formation step in the biosynthesis of archaeal membrane lipids. The protein is Geranylgeranylglyceryl phosphate synthase of Methanobrevibacter smithii (strain ATCC 35061 / DSM 861 / OCM 144 / PS).